Reading from the N-terminus, the 201-residue chain is Orotate phosphoribosyltransferase (201 aa).

113 to 121 serves as a coordination point for 5-phospho-alpha-D-ribose 1-diphosphate; sequence EDIITTGKS. Orotate is bound by residues Thr117 and Arg145.

The protein belongs to the purine/pyrimidine phosphoribosyltransferase family. PyrE subfamily. In terms of assembly, homodimer. It depends on Mg(2+) as a cofactor.

It catalyses the reaction orotidine 5'-phosphate + diphosphate = orotate + 5-phospho-alpha-D-ribose 1-diphosphate. The protein operates within pyrimidine metabolism; UMP biosynthesis via de novo pathway; UMP from orotate: step 1/2. In terms of biological role, catalyzes the transfer of a ribosyl phosphate group from 5-phosphoribose 1-diphosphate to orotate, leading to the formation of orotidine monophosphate (OMP). The chain is Orotate phosphoribosyltransferase from Helicobacter pylori (strain P12).